Consider the following 58-residue polypeptide: Conotoxin Leo-T2 (58 aa).

An N-terminal signal peptide occupies residues Met-1–Ala-22. The propeptide occupies Gln-23–Arg-47.

The protein belongs to the conotoxin T superfamily. Contains 2 disulfide bonds that can be either 'C1-C3, C2-C4' or 'C1-C4, C2-C3', since these disulfide connectivities have been observed for conotoxins with cysteine framework V (for examples, see AC P0DQQ7 and AC P81755). Expressed by the venom duct.

The protein localises to the secreted. This chain is Conotoxin Leo-T2, found in Conus leopardus (Leopard cone).